A 315-amino-acid polypeptide reads, in one-letter code: BTB/POZ domain-containing adapter for CUL3-mediated RhoA degradation protein 3 (315 aa).

At methionine 1 the chain carries N-acetylmethionine. Position 23 is a phosphoserine (serine 23). One can recognise a BTB domain in the interval 32–100; it reads KYVKLNVGGA…LRDGGVPLPE (69 aa). The short motif at 239–245 is the PCNA-binding element; the sequence is QTKVEFP. Positions 269–294 are disordered; it reads NALLEATGGAAGRSHHLDEDEERERE.

The protein belongs to the BACURD family. As to quaternary structure, homotetramer; forms a two-fold symmetric tetramer in solution. Interacts with CUL3; interaction is direct and forms a 5:5 heterodecamer. Component of the BCR(BACURD3) E3 ubiquitin ligase complex, at least composed of CUL3, KCTD10/BACURD3 and RBX1. Interacts with DNA polymerase delta subunit 2/POLD2. Interacts with PCNA. Associated with the tectonic-like complex (also named B9 complex); however as Kctd10 has not been identified in all tectonic-like complexes purifications it is unclear whether it is really part of the complex.

The protein resides in the nucleus. The protein operates within protein modification; protein ubiquitination. In terms of biological role, substrate-specific adapter of a BCR (BTB-CUL3-RBX1) E3 ubiquitin-protein ligase complex. The BCR(BACURD3) E3 ubiquitin ligase complex mediates the ubiquitination of target proteins, leading to their degradation by the proteasome. This chain is BTB/POZ domain-containing adapter for CUL3-mediated RhoA degradation protein 3 (Kctd10), found in Mus musculus (Mouse).